The sequence spans 252 residues: MPAPVVKKPAAKKLPAVPESKLKFSKKQISKRVAESKRRLKKAAVIALRKKENLVRAEKYQNEYIKAEQREIKLRRLAKKRNQFYVPAEAKLAFVVRIRGINKVAPKVRKVLQLFRLRQINNGVFIKLNKATINMLRIAEPYITWGYPNLKSVRELIYKRGFVKHNRQRVPITDNFVIERKLRQAHQIQCVEDLVHEIFTVGPNFKYASNFLWPFKLNTPTGGWRKKANHYVNGGDFGNREDQINRLLRKMV.

This sequence belongs to the universal ribosomal protein uL30 family.

In terms of biological role, binds to G-rich structures in 28S rRNA and in mRNAs. Plays a regulatory role in the translation apparatus; inhibits cell-free translation of mRNAs. The chain is Large ribosomal subunit protein uL30 (RpL7) from Drosophila melanogaster (Fruit fly).